The chain runs to 430 residues: Tol-Pal system protein TolB (430 aa).

Residues 1-21 (MKQALRVAFGFLILWASVLHA) form the signal peptide.

The protein belongs to the TolB family. As to quaternary structure, the Tol-Pal system is composed of five core proteins: the inner membrane proteins TolA, TolQ and TolR, the periplasmic protein TolB and the outer membrane protein Pal. They form a network linking the inner and outer membranes and the peptidoglycan layer.

It is found in the periplasm. In terms of biological role, part of the Tol-Pal system, which plays a role in outer membrane invagination during cell division and is important for maintaining outer membrane integrity. TolB occupies a key intermediary position in the Tol-Pal system because it communicates directly with both membrane-embedded components, Pal in the outer membrane and TolA in the inner membrane. In Escherichia coli O139:H28 (strain E24377A / ETEC), this protein is Tol-Pal system protein TolB.